We begin with the raw amino-acid sequence, 171 residues long: Large ribosomal subunit protein uL10 (171 aa).

It belongs to the universal ribosomal protein uL10 family. Part of the ribosomal stalk of the 50S ribosomal subunit. The N-terminus interacts with L11 and the large rRNA to form the base of the stalk. The C-terminus forms an elongated spine to which L12 dimers bind in a sequential fashion forming a multimeric L10(L12)X complex.

Its function is as follows. Forms part of the ribosomal stalk, playing a central role in the interaction of the ribosome with GTP-bound translation factors. This is Large ribosomal subunit protein uL10 from Rhizorhabdus wittichii (strain DSM 6014 / CCUG 31198 / JCM 15750 / NBRC 105917 / EY 4224 / RW1) (Sphingomonas wittichii).